The sequence spans 168 residues: Protein yop-1 (168 aa).

The Cytoplasmic segment spans residues 1 to 35; it reads MSSPQDRAQQYIGQLDKELSKYPTLNNLEKTTGVP. Residues 36–55 traverse the membrane as a helical segment; the sequence is KAYAVIGLVALYFFLIIFNL. Gly-56 is a topological domain (lumenal). A helical membrane pass occupies residues 57–76; that stretch reads GQLLTNLAGFVLPGYYSLNA. Topologically, residues 77 to 86 are cytoplasmic; it reads LFTASKQDDT. A helical membrane pass occupies residues 87 to 103; that stretch reads QWLTYWVVFSLFTVIES. Residues 104-105 lie on the Lumenal side of the membrane; the sequence is LI. Residues 106 to 124 traverse the membrane as a helical segment; sequence SVVYWFPFYFTFKFVFLLW. At 125 to 168 the chain is on the cytoplasmic side; the sequence is LSLPTFKGAETIFRSFLAPTLGRYFQNGSTASGLRAKADAVHTD.

This sequence belongs to the DP1 family. In terms of assembly, oligomer.

It is found in the endoplasmic reticulum membrane. It localises to the golgi apparatus membrane. Required to generate and maintain the structure of the tubular endoplasmic reticulum network and the vacuole. Induces high curvature in membranes and causes membrane tubule formation. Involved in membrane/vesicle trafficking. The sequence is that of Protein yop-1 (yop-1) from Neurospora crassa (strain ATCC 24698 / 74-OR23-1A / CBS 708.71 / DSM 1257 / FGSC 987).